A 198-amino-acid polypeptide reads, in one-letter code: MKIGILAVQGDVEEHEYAVKKAMDELGISGDVARVKRIDDLRGLSGIIIPGGESTSIWRLTSKSNLMNALRDEVSNGLPAMGTCAGAIFMAREVKDRIMGETGQGVLGIMNISVVRNFYGRQRESFETTLNIEGIGTVRAVFIRAPAIVKYWGSAKPLVAYGDNYPVVIENNMLALTFHPELTTILVHEWFISNLVKK.

Position 52–54 (52–54 (GES)) interacts with L-glutamine. C84 functions as the Nucleophile in the catalytic mechanism. L-glutamine is bound by residues R116 and 143-144 (IR). Catalysis depends on charge relay system residues H179 and E181.

Belongs to the glutaminase PdxT/SNO family. In terms of assembly, in the presence of PdxS, forms a dodecamer of heterodimers. Only shows activity in the heterodimer.

It catalyses the reaction aldehydo-D-ribose 5-phosphate + D-glyceraldehyde 3-phosphate + L-glutamine = pyridoxal 5'-phosphate + L-glutamate + phosphate + 3 H2O + H(+). The enzyme catalyses L-glutamine + H2O = L-glutamate + NH4(+). It functions in the pathway cofactor biosynthesis; pyridoxal 5'-phosphate biosynthesis. Its function is as follows. Catalyzes the hydrolysis of glutamine to glutamate and ammonia as part of the biosynthesis of pyridoxal 5'-phosphate. The resulting ammonia molecule is channeled to the active site of PdxS. In Caldivirga maquilingensis (strain ATCC 700844 / DSM 13496 / JCM 10307 / IC-167), this protein is Pyridoxal 5'-phosphate synthase subunit PdxT.